Consider the following 150-residue polypeptide: Large ribosomal subunit protein bL9 (150 aa).

The protein belongs to the bacterial ribosomal protein bL9 family.

In terms of biological role, binds to the 23S rRNA. The sequence is that of Large ribosomal subunit protein bL9 from Cupriavidus taiwanensis (strain DSM 17343 / BCRC 17206 / CCUG 44338 / CIP 107171 / LMG 19424 / R1) (Ralstonia taiwanensis (strain LMG 19424)).